The chain runs to 355 residues: MKIAVLPGDGIGPEIVNEAVKVLNALDEKFELEHAPVGGAGYEASGHPLPDATLALAKEADAILFGAVGDWKYDSLERALRPEQAILGLRKHLELFANFRPAICYPQLVDASPLKPELVAGLDILIVRELNGDIYFGQPRGVRAAPDGPFAGEREGFDTMRYSEPEVRRIAHVAFQAAQKRAKKLLSVDKSNVLETSQFWRDVMIDVSKEYADVELSHMYVDNAAMQLAKAPKQFDVIVTGNMFGDILSDEASMLTGSIGMLPSASLDKNNKGLYEPSHGSAPDIAGKGIANPLATILSAAMLLRYSLNRAEQADRIERAVKTVLEQGYRTGDIATPGCRQVGTAAMGDAVVAAL.

Residues Arg90, Arg100, Arg128, and Asp222 each coordinate substrate. 3 residues coordinate Mg(2+): Asp222, Asp246, and Asp250. 280–292 is an NAD(+) binding site; that stretch reads GSAPDIAGKGIAN.

The protein belongs to the isocitrate and isopropylmalate dehydrogenases family. LeuB type 1 subfamily. As to quaternary structure, homodimer. The cofactor is Mg(2+). It depends on Mn(2+) as a cofactor.

Its subcellular location is the cytoplasm. It catalyses the reaction (2R,3S)-3-isopropylmalate + NAD(+) = 4-methyl-2-oxopentanoate + CO2 + NADH. Its pathway is amino-acid biosynthesis; L-leucine biosynthesis; L-leucine from 3-methyl-2-oxobutanoate: step 3/4. Its function is as follows. Catalyzes the oxidation of 3-carboxy-2-hydroxy-4-methylpentanoate (3-isopropylmalate) to 3-carboxy-4-methyl-2-oxopentanoate. The product decarboxylates to 4-methyl-2 oxopentanoate. This is 3-isopropylmalate dehydrogenase from Burkholderia thailandensis (strain ATCC 700388 / DSM 13276 / CCUG 48851 / CIP 106301 / E264).